A 144-amino-acid polypeptide reads, in one-letter code: Phospholipase A2, membrane associated (144 aa).

The signal sequence occupies residues 1–20 (MKTLLLLAVIMIFGLLQAHG). 7 cysteine pairs are disulfide-bonded: C46-C137, C48-C64, C63-C117, C69-C144, C70-C110, C79-C103, and C97-C108. The Ca(2+) site is built by H47, G49, and G51. H67 is an active-site residue. D68 is a Ca(2+) binding site. Residue D111 is part of the active site.

The protein belongs to the phospholipase A2 family. Ca(2+) is required as a cofactor. Expressed in various tissues including heart, kidney, liver, lung, pancreas, placenta, skeletal muscle, prostate, ovary, colon and small intestine. Not detected in lymphoid organs and brain. Expressed in platelets (at protein level).

The protein localises to the secreted. It is found in the cell membrane. The protein resides in the mitochondrion outer membrane. The catalysed reaction is a 1,2-diacyl-sn-glycero-3-phosphoethanolamine + H2O = a 1-acyl-sn-glycero-3-phosphoethanolamine + a fatty acid + H(+). The enzyme catalyses 1-hexadecanoyl-2-(9Z-octadecenoyl)-sn-glycero-3-phosphoethanolamine + H2O = 1-hexadecanoyl-sn-glycero-3-phosphoethanolamine + (9Z)-octadecenoate + H(+). It catalyses the reaction 1-hexadecanoyl-2-(9Z,12Z-octadecadienoyl)-sn-glycero-3-phosphoethanolamine + H2O = 1-hexadecanoyl-sn-glycero-3-phosphoethanolamine + (9Z,12Z)-octadecadienoate + H(+). It carries out the reaction 1-hexadecanoyl-2-(5Z,8Z,11Z,14Z-eicosatetraenoyl)-sn-glycero-3-phosphoethanolamine + H2O = 1-hexadecanoyl-sn-glycero-3-phosphoethanolamine + (5Z,8Z,11Z,14Z)-eicosatetraenoate + H(+). The catalysed reaction is N-hexadecanoyl-1,2-di-(9Z-octadecenoyl)-sn-glycero-3-phosphoethanolamine + H2O = N-hexadecanoyl-1-(9Z-octadecenoyl)-sn-glycero-3-phosphoethanolamine + (9Z)-octadecenoate + H(+). The enzyme catalyses 1,2-dihexadecanoyl-sn-glycero-3-phospho-(1'-sn-glycerol) + H2O = 1-hexadecanoyl-sn-glycero-3-phospho-(1'-sn-glycerol) + hexadecanoate + H(+). It catalyses the reaction 1-hexadecanoyl-2-(9Z-octadecenoyl)-sn-glycero-3-phosphoglycerol + H2O = 1-hexadecanoyl-sn-glycero-3-phosphoglycerol + (9Z)-octadecenoate + H(+). It carries out the reaction 1-hexadecanoyl-2-(9Z-octadecenoyl)-sn-glycero-3-phospho-(1'-sn-glycerol) + H2O = 1-hexadecanoyl-sn-glycero-3-phospho-(1'-sn-glycerol) + (9Z)-octadecenoate + H(+). The catalysed reaction is a 1,2-diacyl-sn-glycero-3-phosphocholine + H2O = a 1-acyl-sn-glycero-3-phosphocholine + a fatty acid + H(+). The enzyme catalyses 1,2-dihexadecanoyl-sn-glycero-3-phosphocholine + H2O = 1-hexadecanoyl-sn-glycero-3-phosphocholine + hexadecanoate + H(+). It catalyses the reaction 1-hexadecanoyl-2-(9Z-octadecenoyl)-sn-glycero-3-phosphocholine + H2O = 1-hexadecanoyl-sn-glycero-3-phosphocholine + (9Z)-octadecenoate + H(+). It carries out the reaction 1-hexadecanoyl-2-(9Z,12Z-octadecadienoyl)-sn-glycero-3-phosphocholine + H2O = (9Z,12Z)-octadecadienoate + 1-hexadecanoyl-sn-glycero-3-phosphocholine + H(+). The catalysed reaction is 1-hexadecanoyl-2-(4Z,7Z,10Z,13Z,16Z,19Z-docosahexaenoyl)-sn-glycero-3-phosphocholine + H2O = (4Z,7Z,10Z,13Z,16Z,19Z)-docosahexaenoate + 1-hexadecanoyl-sn-glycero-3-phosphocholine + H(+). In terms of biological role, secretory calcium-dependent phospholipase A2 that primarily targets extracellular phospholipids with implications in host antimicrobial defense, inflammatory response and tissue regeneration. Hydrolyzes the ester bond of the fatty acyl group attached at sn-2 position of phospholipids (phospholipase A2 activity) with preference for phosphatidylethanolamines and phosphatidylglycerols over phosphatidylcholines. Contributes to lipid remodeling of cellular membranes and generation of lipid mediators involved in pathogen clearance. Displays bactericidal activity against Gram-positive bacteria by directly hydrolyzing phospholipids of the bacterial membrane. Upon sterile inflammation, targets membrane phospholipids of extracellular mitochondria released from activated platelets, generating free unsaturated fatty acids such as arachidonate that is used by neighboring leukocytes to synthesize inflammatory eicosanoids such as leukotrienes. Simultaneously, by compromising mitochondrial membrane integrity, promotes the release in circulation of potent damage-associated molecular pattern molecules that activate the innate immune response. Plays a stem cell regulator role in the intestinal crypt. Within intracellular compartment mediates Paneth cell differentiation and its stem cell supporting functions by inhibiting Wnt signaling pathway in intestinal stem cell (ICS). Secreted in the intestinal lumen upon inflammation, acts in an autocrine way and promotes prostaglandin E2 synthesis that stimulates Wnt signaling pathway in ICS cells and tissue regeneration. May play a role in the biosynthesis of N-acyl ethanolamines that regulate energy metabolism and inflammation. Hydrolyzes N-acyl phosphatidylethanolamines to N-acyl lysophosphatidylethanolamines, which are further cleaved by a lysophospholipase D to release N-acyl ethanolamines. Independent of its catalytic activity, acts as a ligand for integrins. Binds to and activates integrins ITGAV:ITGB3, ITGA4:ITGB1 and ITGA5:ITGB1. Binds to a site (site 2) which is distinct from the classical ligand-binding site (site 1) and induces integrin conformational changes and enhanced ligand binding to site 1. Induces cell proliferation in an integrin-dependent manner. The polypeptide is Phospholipase A2, membrane associated (PLA2G2A) (Homo sapiens (Human)).